A 509-amino-acid chain; its full sequence is Citrate synthase 3, peroxisomal (509 aa).

Active-site residues include His-319, His-358, and Asp-414. A disordered region spans residues 485–509 (SKESDKLGQVATSNASRRRLAGSSV). Over residues 500 to 509 (SRRRLAGSSV) the composition is skewed to basic residues.

It belongs to the citrate synthase family. As to expression, widely expressed. Expressed throughout the shoot. Expressed in flower, silique, stem, cauline leaf, young leaf, mature leaf and senescent leaf.

The protein localises to the peroxisome. The enzyme catalyses oxaloacetate + acetyl-CoA + H2O = citrate + CoA + H(+). It participates in carbohydrate metabolism; tricarboxylic acid cycle; isocitrate from oxaloacetate: step 1/2. Peroxisomal citrate synthase required for the fatty acid respiration in seedlings, citrate being exported from peroxisomes into mitochondria during respiration of triacylglycerol (TAG). Indeed, complete respiration requires the transfer of carbon in the form of citrate from the peroxisome to the mitochondria. In Arabidopsis thaliana (Mouse-ear cress), this protein is Citrate synthase 3, peroxisomal (CSY3).